Here is a 253-residue protein sequence, read N- to C-terminus: Ditrans,polycis-undecaprenyl-diphosphate synthase ((2E,6E)-farnesyl-diphosphate specific) (253 aa).

The active site involves aspartate 25. Aspartate 25 is a Mg(2+) binding site. Substrate is bound by residues 26-29 (GNGR), tryptophan 30, arginine 38, histidine 42, and 70-72 (SSE). The active-site Proton acceptor is the asparagine 73. The substrate site is built by tryptophan 74, arginine 76, and arginine 193. Histidine 198 is a Mg(2+) binding site. Substrate is bound at residue 199–201 (RIS). Glutamate 212 serves as a coordination point for Mg(2+).

The protein belongs to the UPP synthase family. In terms of assembly, homodimer. Mg(2+) serves as cofactor.

The enzyme catalyses 8 isopentenyl diphosphate + (2E,6E)-farnesyl diphosphate = di-trans,octa-cis-undecaprenyl diphosphate + 8 diphosphate. Functionally, catalyzes the sequential condensation of isopentenyl diphosphate (IPP) with (2E,6E)-farnesyl diphosphate (E,E-FPP) to yield (2Z,6Z,10Z,14Z,18Z,22Z,26Z,30Z,34E,38E)-undecaprenyl diphosphate (di-trans,octa-cis-UPP). UPP is the precursor of glycosyl carrier lipid in the biosynthesis of bacterial cell wall polysaccharide components such as peptidoglycan and lipopolysaccharide. The sequence is that of Ditrans,polycis-undecaprenyl-diphosphate synthase ((2E,6E)-farnesyl-diphosphate specific) from Pectobacterium atrosepticum (strain SCRI 1043 / ATCC BAA-672) (Erwinia carotovora subsp. atroseptica).